We begin with the raw amino-acid sequence, 709 residues long: Polyribonucleotide nucleotidyltransferase (709 aa).

2 residues coordinate Mg(2+): aspartate 487 and aspartate 493. The KH domain maps to 554–613 (PRIHTMKISSDKIKDVIGKGGAVIRALCEETGTTIEIEDDGTIKIAATEGAAAKEAIRRI). The S1 motif domain occupies 623–691 (GKIYPGKVMR…RQGRIRLSIK (69 aa)).

It belongs to the polyribonucleotide nucleotidyltransferase family. As to quaternary structure, component of the RNA degradosome, which is a multiprotein complex involved in RNA processing and mRNA degradation. It depends on Mg(2+) as a cofactor.

It localises to the cytoplasm. It catalyses the reaction RNA(n+1) + phosphate = RNA(n) + a ribonucleoside 5'-diphosphate. In terms of biological role, involved in mRNA degradation. Catalyzes the phosphorolysis of single-stranded polyribonucleotides processively in the 3'- to 5'-direction. This chain is Polyribonucleotide nucleotidyltransferase, found in Aliivibrio salmonicida (strain LFI1238) (Vibrio salmonicida (strain LFI1238)).